Consider the following 508-residue polypeptide: Maturase K (508 aa).

It belongs to the intron maturase 2 family. MatK subfamily.

The protein resides in the plastid. Its subcellular location is the chloroplast. Its function is as follows. Usually encoded in the trnK tRNA gene intron. Probably assists in splicing its own and other chloroplast group II introns. The protein is Maturase K of Abrus precatorius (Indian licorice).